A 432-amino-acid chain; its full sequence is Monooxygenase penA (432 aa).

Residues 7-29 (FKIAIIGAGPAGLTLASLLTASP) traverse the membrane as a helical segment. Residue asparagine 33 is glycosylated (N-linked (GlcNAc...) asparagine).

This sequence belongs to the aromatic-ring hydroxylase family. The cofactor is FAD.

It localises to the membrane. It participates in secondary metabolite biosynthesis. Its pathway is alkaloid biosynthesis. The protein operates within mycotoxin biosynthesis. Its function is as follows. Monooxygenase; part of the gene cluster that mediates the biosynthesis of penigequinolones, potent insecticidal alkaloids that contain a highly modified 10-carbon prenyl group. The first stage is catalyzed by the nonribosomal peptide synthetase penN that condenses anthranilic acid and O-methyl-L-tyrosine to produce 4'-methoxycyclopeptin. 4'-methoxycyclopeptin is then converted to 4'-methoxydehydrocyclopeptin by the ketoglutarate-dependent dioxygenase penM through dehydrogenation to form a double bond between C-alpha and C-beta of the O-methyltyrosine side chain. PenM also converts its first product methoxydehydrocyclopeptin to 4'-methoxycyclopenin. The following conversion of 4'methoxycyclopenin into 4'-methoxyviridicatin is catalyzed by the cyclopenase penL. 4'-methoxyviridicatin is the precursor of quinolone natural products, and is further converted to quinolinone B. The prenyltransferase penI then catalyzes the canonical Friedel-Crafts alkylation of quinolinone B with dimethylallyl cation to yield dimethylallyl quinolone, which is subjected to FAD-dependent dehydrogenation by the FAD-linked oxidoreductase penH to yield conjugated aryl diene. The delta(3') double bond then serves as the site of the second alkylation with DMAPP catalyzed by the prenyltransferase penG to yield a carbenium ion intermediate, which can be attacked by H(2)O to yield a styrenyl quinolone containing a C3'-hydroxyprenyl chain, or undergo cyclization to yield yaequinolones J1 and J2. The conversion of the styrenyl quinolone into the tetrahydrofuran-containing yaequinolone C is performed by the FAD-dependent monooxygenase penE and involves epoxidation of the terminal C7'-C8' olefin, followed by epoxide ring opening initiated by the C3' hydroxyl group. The predicted cysteine hydrolase penJ acts as an epoxide hydrolase that enhances the rate of the 5-exo-tet cyclization step, increasing the yield of yaequinolone C. PenF catalyzes the cationic rearrangement of the epoxide formed by penE (before ring opening to produce yaequinolone C) into yaequinolone D. Finally, the short-chain dehydrogenase/reductase (SDR)-like reductase penD, catalyzes both the dehydration of yaequinolone D and the reduction of the resulting oxonium to yield penigequinolone. The sequence is that of Monooxygenase penA from Penicillium thymicola.